Reading from the N-terminus, the 845-residue chain is Protein translocase subunit SecA 1 (845 aa).

Residues Q85, 103–107 (GEGKT), and D492 each bind ATP.

The protein belongs to the SecA family. In terms of assembly, monomer and homodimer. Part of the essential Sec protein translocation apparatus which comprises SecA, SecYEG and auxiliary proteins SecDF. Other proteins may also be involved.

The protein localises to the cell membrane. It is found in the cytoplasm. It carries out the reaction ATP + H2O + cellular proteinSide 1 = ADP + phosphate + cellular proteinSide 2.. Functionally, part of the Sec protein translocase complex. Interacts with the SecYEG preprotein conducting channel. Has a central role in coupling the hydrolysis of ATP to the transfer of proteins into and across the cell membrane, serving as an ATP-driven molecular motor driving the stepwise translocation of polypeptide chains across the membrane. In Corynebacterium efficiens (strain DSM 44549 / YS-314 / AJ 12310 / JCM 11189 / NBRC 100395), this protein is Protein translocase subunit SecA 1.